A 342-amino-acid chain; its full sequence is Uricase (342 aa).

Residues Lys35 and Thr80 each act as charge relay system in the active site. Urate contacts are provided by Thr80, Asp81, Phe204, Arg221, Val269, Gln270, and Asn296. The active-site Charge relay system is the His298. The Microbody targeting signal signature appears at 340-342 (SHL).

Belongs to the uricase family. Malpighian tubules.

The protein resides in the peroxisome. It carries out the reaction urate + O2 + H2O = 5-hydroxyisourate + H2O2. It functions in the pathway purine metabolism; urate degradation; (S)-allantoin from urate: step 1/3. With respect to regulation, repressed by 20-hydroxyecdysone. Catalyzes the oxidation of uric acid to 5-hydroxyisourate, which is further processed to form (S)-allantoin. The chain is Uricase (Uro) from Drosophila virilis (Fruit fly).